The sequence spans 138 residues: Putative pre-16S rRNA nuclease (138 aa).

It belongs to the YqgF nuclease family.

The protein localises to the cytoplasm. Functionally, could be a nuclease involved in processing of the 5'-end of pre-16S rRNA. This Porphyromonas gingivalis (strain ATCC BAA-308 / W83) protein is Putative pre-16S rRNA nuclease.